A 100-amino-acid chain; its full sequence is NADH-quinone oxidoreductase subunit K (100 aa).

Helical transmembrane passes span 4-24 (TSYY…GVLL), 29-49 (IVVF…LVAF), and 60-80 (VIVF…LALL).

Belongs to the complex I subunit 4L family. In terms of assembly, NDH-1 is composed of 14 different subunits. Subunits NuoA, H, J, K, L, M, N constitute the membrane sector of the complex.

The protein resides in the cell membrane. The catalysed reaction is a quinone + NADH + 5 H(+)(in) = a quinol + NAD(+) + 4 H(+)(out). Functionally, NDH-1 shuttles electrons from NADH, via FMN and iron-sulfur (Fe-S) centers, to quinones in the respiratory chain. The immediate electron acceptor for the enzyme in this species is believed to be ubiquinone. Couples the redox reaction to proton translocation (for every two electrons transferred, four hydrogen ions are translocated across the cytoplasmic membrane), and thus conserves the redox energy in a proton gradient. In Chloroflexus aurantiacus (strain ATCC 29366 / DSM 635 / J-10-fl), this protein is NADH-quinone oxidoreductase subunit K.